Reading from the N-terminus, the 707-residue chain is MARNIPLERVRNIGIAAHIDAGKTTTTERILFYSGVIHKIGEVHEGNTVTDWMAQERERGITITAAAITTAWTRRDPENPTQPLPGALEHKINIIDTPGHVDFTIEVERSMRVLDGVITVLCSVGGVQPQTETVWRQANRYNVPRFIFVNKMDRTGANFYKVYSQVRDRLRANAVPIQLPIGAEDTLSGIVDLVGMKAYVYGNDIGTDIRVEEIPADMEELVQEYRAKLIEAVSETDDVLLEKYFGGEELTEAEIKAALRKGTVANTIVPMLCGSAFKNKGVQQMLDAVLDYLPSPLDIPPIKGLLPNGTEVERSADDSQPLSALAFKIMADPYGRLTFVRVYSGILQKGSYALNASKDKKERISRLIVLKADDRIEVDELRAGDLGAVVGLKDTFTGDTLCTEDSPVILESLFIPEPVISVAIEPKTKADLDKLSKALQSLSEEDPTFRVHVDQETNQTIIAGMGELHLEILVDRMLREFKVEANVGAPQVAYRETIRKAVNNVEGLYKRQTGGKGQYGHVVINLEPGEPGTGFEFVSKIVGGVVPKEYIGPAEQGMKERCESGVIAGYPLIDVKVTMVDGSYHDVDSSEMAFKIAGSLALREAAQKAQPVLLEPMMKVEVEVSGDFLGDVMGDLNARRGQIESMDNEGGVSKVTSRVPLAEMFGYATDIRSKTQGRGTFSMEFSHYEEVPRNVAETIIAKNKGNA.

The region spanning E8–L297 is the tr-type G domain. GTP is bound by residues A17–T24, D96–H100, and N150–D153.

The protein belongs to the TRAFAC class translation factor GTPase superfamily. Classic translation factor GTPase family. EF-G/EF-2 subfamily.

It is found in the cytoplasm. Functionally, catalyzes the GTP-dependent ribosomal translocation step during translation elongation. During this step, the ribosome changes from the pre-translocational (PRE) to the post-translocational (POST) state as the newly formed A-site-bound peptidyl-tRNA and P-site-bound deacylated tRNA move to the P and E sites, respectively. Catalyzes the coordinated movement of the two tRNA molecules, the mRNA and conformational changes in the ribosome. This chain is Elongation factor G, found in Gloeobacter violaceus (strain ATCC 29082 / PCC 7421).